A 405-amino-acid chain; its full sequence is MILRRLVLSATSNSNPRRSQSLSSSGVRILSSSSSDRYTSSSQRYSGDDRLARLRHKDWLAPNEVLKIFDNVKDPSFLLPAYQHYSKRKDYQPTESLYALMINKFGQAKMYDEIEEVMRTIKLEKRCRFSEEFFYNLMRIYGNLAGRINRAIEILFGMPDFGCWPSSKSFNFILNLLVSAKLFDEIHKIFVSAPKLGVEIDACCLNILIKGLCESGNLEAALQLLDEFPQQKSRPNVMTFSPLIRGFCNKGKFEEAFKLLERMEKERIEPDTITFNILISGLRKKGRVEEGIDLLERMKVKGCEPNPGTYQEVLYGLLDKKRNLEAKEMMSQMISWGMRPSFLSYKKMVLGLCETKSVVEMDWVLRQMVNHGFVPKTLMWWKVVQCVVSKNNDDSQANLDRITAC.

A mitochondrion-targeting transit peptide spans 1-37; that stretch reads MILRRLVLSATSNSNPRRSQSLSSSGVRILSSSSSDR. Residues 13-44 are disordered; that stretch reads NSNPRRSQSLSSSGVRILSSSSSDRYTSSSQR. 8 PPR repeats span residues 94–124, 130–165, 166–200, 201–235, 236–270, 271–305, 306–340, and 341–375; these read TESL…IKLE, SEEF…GCWP, SSKS…GVEI, DACC…KSRP, NVMT…RIEP, DTIT…GCEP, NPGT…GMRP, and SFLS…GFVP.

It belongs to the PPR family. P subfamily.

It is found in the mitochondrion. This chain is Pentatricopeptide repeat-containing protein At3g14580, mitochondrial, found in Arabidopsis thaliana (Mouse-ear cress).